Consider the following 374-residue polypeptide: Chaperone protein DnaJ (374 aa).

The J domain occupies 5 to 70 (DYYEVLGVER…SKRAAFDQYG (66 aa)). The segment at 133–211 (GTTVSIRVPT…CHGEGRVEEY (79 aa)) adopts a CR-type zinc-finger fold. Residues Cys-146, Cys-149, Cys-163, Cys-166, Cys-185, Cys-188, Cys-199, and Cys-202 each contribute to the Zn(2+) site. CXXCXGXG motif repeat units follow at residues 146-153 (CQPCDGSG), 163-170 (CPTCGGIG), 185-192 (CPRCHGQG), and 199-206 (CTSCHGEG).

The protein belongs to the DnaJ family. As to quaternary structure, homodimer. The cofactor is Zn(2+).

It is found in the cytoplasm. Its function is as follows. Participates actively in the response to hyperosmotic and heat shock by preventing the aggregation of stress-denatured proteins and by disaggregating proteins, also in an autonomous, DnaK-independent fashion. Unfolded proteins bind initially to DnaJ; upon interaction with the DnaJ-bound protein, DnaK hydrolyzes its bound ATP, resulting in the formation of a stable complex. GrpE releases ADP from DnaK; ATP binding to DnaK triggers the release of the substrate protein, thus completing the reaction cycle. Several rounds of ATP-dependent interactions between DnaJ, DnaK and GrpE are required for fully efficient folding. Also involved, together with DnaK and GrpE, in the DNA replication of plasmids through activation of initiation proteins. This is Chaperone protein DnaJ from Pseudomonas putida (strain GB-1).